Reading from the N-terminus, the 378-residue chain is MKRLFAWGAPLFALVALTLSLFSQADTKPSTIDSTSANYQQATLAGGCFWCTESDMEKLPGVVDVISGYAGGDVDNPTYKQVSSGKTGHIEVIQVTFDPKIVTYEQVLDNFFRHIDPTDDQGSFVDRGEQYRPAIFYHNAEQLEVAKRFMMEIDQLGIFKKPLKTELIEFKKFWPAEDYHQDYYKKNKVRYNYYRYASGRDQYLDEIFGADRNTHPKTLRQWIDEKNGQANVKAYVRPSDEQIRAKLTSLQYKVTQRDGTERPFDNEYWDNKEEGIYVDIVSGEPLFSSTDKYDSKTGWPSFTQPLNSSYIVTKDDNSLFYTRTEVRSRFADSHLGHVFNDGPAPTGLRYCMNSAAMRFIPKQEMAAQGYGEYLALFK.

Positions Gln-40 to Ala-197 are peptide methionine sulfoxide reductase A. The active site involves Cys-48. Residues Asp-240–Lys-362 form the MsrB domain. Cys-351 acts as the Nucleophile in catalysis.

It in the N-terminal section; belongs to the MsrA Met sulfoxide reductase family. The protein in the C-terminal section; belongs to the MsrB Met sulfoxide reductase family.

It carries out the reaction L-methionyl-[protein] + [thioredoxin]-disulfide + H2O = L-methionyl-(S)-S-oxide-[protein] + [thioredoxin]-dithiol. The catalysed reaction is [thioredoxin]-disulfide + L-methionine + H2O = L-methionine (S)-S-oxide + [thioredoxin]-dithiol. It catalyses the reaction L-methionyl-[protein] + [thioredoxin]-disulfide + H2O = L-methionyl-(R)-S-oxide-[protein] + [thioredoxin]-dithiol. Has an important function as a repair enzyme for proteins that have been inactivated by oxidation. Catalyzes the reversible oxidation-reduction of methionine sulfoxide in proteins to methionine. This Vibrio cholerae serotype O1 (strain ATCC 39315 / El Tor Inaba N16961) protein is Peptide methionine sulfoxide reductase MsrA/MsrB (msrAB).